An 89-amino-acid chain; its full sequence is MAKKSKIAKAQKREALVAKYADKRAALKAAGDYIGLAALPKDSSPVRVHNRDWIDGRPHAYMREFGMSRLNFRQLAHKGQIPGVRKASW.

It belongs to the universal ribosomal protein uS14 family. In terms of assembly, part of the 30S ribosomal subunit. Contacts proteins S3 and S10.

Its function is as follows. Binds 16S rRNA, required for the assembly of 30S particles and may also be responsible for determining the conformation of the 16S rRNA at the A site. The chain is Small ribosomal subunit protein uS14 from Leuconostoc mesenteroides subsp. mesenteroides (strain ATCC 8293 / DSM 20343 / BCRC 11652 / CCM 1803 / JCM 6124 / NCDO 523 / NBRC 100496 / NCIMB 8023 / NCTC 12954 / NRRL B-1118 / 37Y).